Reading from the N-terminus, the 404-residue chain is Zinc transporter 10 (404 aa).

The N-terminal stretch at methionine 1–alanine 22 is a signal peptide. Topologically, residues alanine 23–lysine 49 are extracellular. Residues methionine 50–glycine 70 form a helical membrane-spanning segment. Over arginine 71–serine 86 the chain is Cytoplasmic. Residues glycine 87–valine 107 traverse the membrane as a helical segment. Residues histidine 108 to arginine 129 are Extracellular-facing. A helical membrane pass occupies residues phenylalanine 130–valine 150. Over glycine 151–histidine 248 the chain is Cytoplasmic. Residues valine 249–serine 269 traverse the membrane as a helical segment. The Extracellular portion of the chain corresponds to leucine 270–lysine 280. A helical membrane pass occupies residues proline 281–isoleucine 301. The Cytoplasmic portion of the chain corresponds to serine 302 to alanine 311. Residues phenylalanine 312–valine 332 form a helical membrane-spanning segment. Topologically, residues alanine 333–alanine 343 are extracellular. Residues leucine 344–valine 364 traverse the membrane as a helical segment. Topologically, residues aspartate 365–glutamine 383 are cytoplasmic. The helical transmembrane segment at valine 384–alanine 404 threads the bilayer.

It belongs to the ZIP transporter (TC 2.A.5) family.

It localises to the cell membrane. Zinc transporter that may be involved in zinc uptake from the rhizosphere. This is Zinc transporter 10 (ZIP10) from Oryza sativa subsp. japonica (Rice).